Consider the following 444-residue polypeptide: Platelet-activating factor acetylhydrolase (444 aa).

The signal sequence occupies residues 1-21 (MLPSKLHALFCLCTCLALVYP). Asn60 and Asn200 each carry an N-linked (GlcNAc...) asparagine glycan. Ser274 serves as the catalytic Nucleophile. Catalysis depends on charge relay system residues Asp297 and His352. Residues Asn424 and Asn434 are each glycosylated (N-linked (GlcNAc...) asparagine).

The protein belongs to the AB hydrolase superfamily. Lipase family. N-glycosylated. In terms of tissue distribution, plasma.

Its subcellular location is the secreted. The protein localises to the extracellular space. The catalysed reaction is a 1-O-alkyl-2-acetyl-sn-glycero-3-phosphocholine + H2O = a 1-O-alkyl-sn-glycero-3-phosphocholine + acetate + H(+). It carries out the reaction 1-O-decyl-2-acetyl-sn-glycero-3-phosphocholine + H2O = 1-O-decyl-sn-glycero-3-phosphocholine + acetate + H(+). It catalyses the reaction 1-O-dodecyl-2-acetyl-sn-glycero-3-phosphocholine + H2O = 1-O-dodecyl-sn-glycero-3-phosphocholine + acetate + H(+). The enzyme catalyses 1-O-tetradecyl-2-acetyl-sn-glycero-3-phosphocholine + H2O = 1-O-tetradecyl-sn-glycero-3-phosphocholine + acetate + H(+). The catalysed reaction is 1-O-hexadecyl-2-acetyl-sn-glycero-3-phosphocholine + H2O = 1-O-hexadecyl-sn-glycero-3-phosphocholine + acetate + H(+). It carries out the reaction 1-O-octadecyl-2-acetyl-sn-glycero-3-phosphocholine + H2O = 1-O-octadecyl-sn-glycero-3-phosphocholine + acetate + H(+). It catalyses the reaction 1-hexadecanoyl-2-acetyl-sn-glycero-3-phosphocholine + H2O = 1-hexadecanoyl-sn-glycero-3-phosphocholine + acetate + H(+). The enzyme catalyses 1-hexadecanoyl-2-propionyl-sn-glycero-3-phosphocholine + H2O = propanoate + 1-hexadecanoyl-sn-glycero-3-phosphocholine + H(+). The catalysed reaction is 1-hexadecanoyl-2-butanoyl-sn-glycero-3-phosphocholine + H2O = butanoate + 1-hexadecanoyl-sn-glycero-3-phosphocholine + H(+). It carries out the reaction 1-hexadecanoyl-2-pentanoyl-sn-glycero-3-phosphocholine + H2O = pentanoate + 1-hexadecanoyl-sn-glycero-3-phosphocholine + H(+). It catalyses the reaction 1-hexadecanoyl-2-glutaroyl-sn-glycero-3-phosphocholine + H2O = glutarate + 1-hexadecanoyl-sn-glycero-3-phosphocholine + H(+). The enzyme catalyses 1-hexadecanoyl-2-(5-oxopentanoyl)-sn-glycero-3-phosphocholine + H2O = 5-oxopentanoate + 1-hexadecanoyl-sn-glycero-3-phosphocholine + H(+). The catalysed reaction is 1-hexadecanoyl-2-(9-oxononanoyl)-sn-glycero-3-phosphocholine + H2O = 9-oxononanoate + 1-hexadecanoyl-sn-glycero-3-phosphocholine + H(+). It carries out the reaction 1-hexadecanoyl-2-[9-hydroperoxy-(10E-octadecenoyl)]-sn-glycero-3-phosphocholine + H2O = 9-hydroperoxy-10E-octadecenoate + 1-hexadecanoyl-sn-glycero-3-phosphocholine + H(+). It catalyses the reaction 1-hexadecanoyl-2-(10-hydroperoxy-8E-octadecenoyl)-sn-glycero-3-phosphocholine + H2O = 10-hydroperoxy-(8E)-octadecenoate + 1-hexadecanoyl-sn-glycero-3-phosphocholine + H(+). Lipoprotein-associated calcium-independent phospholipase A2 involved in phospholipid catabolism during inflammatory and oxidative stress response. At the lipid-aqueous interface, hydrolyzes the ester bond of fatty acyl group attached at sn-2 position of phospholipids (phospholipase A2 activity). Specifically targets phospholipids with a short-chain fatty acyl group at sn-2 position. Can hydrolyze phospholipids with long fatty acyl chains, only if they carry oxidized functional groups. Hydrolyzes and inactivates platelet-activating factor (PAF, 1-O-alkyl-2-acetyl-sn-glycero-3-phosphocholine), a potent pro-inflammatory signaling lipid that acts through PTAFR on various innate immune cells. Hydrolyzes oxidatively truncated phospholipids carrying an aldehyde group at omega position, preventing their accumulation in low-density lipoprotein (LDL) particles and uncontrolled pro-inflammatory effects. As part of high-density lipoprotein (HDL) particles, can hydrolyze phospholipids having long-chain fatty acyl hydroperoxides at sn-2 position and protect against potential accumulation of these oxylipins in the vascular wall. Catalyzes the release from membrane phospholipids of F2-isoprostanes, lipid biomarkers of cellular oxidative damage. In Bos taurus (Bovine), this protein is Platelet-activating factor acetylhydrolase (PLA2G7).